We begin with the raw amino-acid sequence, 203 residues long: Pyrrolidone-carboxylate peptidase 1 (203 aa).

Residues Glu78, Cys141, and His165 contribute to the active site.

The protein belongs to the peptidase C15 family. Homotetramer.

The protein localises to the cytoplasm. It catalyses the reaction Release of an N-terminal pyroglutamyl group from a polypeptide, the second amino acid generally not being Pro.. Functionally, removes 5-oxoproline from various penultimate amino acid residues except L-proline. In Caldanaerobacter subterraneus subsp. tengcongensis (strain DSM 15242 / JCM 11007 / NBRC 100824 / MB4) (Thermoanaerobacter tengcongensis), this protein is Pyrrolidone-carboxylate peptidase 1.